The primary structure comprises 148 residues: Large ribosomal subunit protein uL13 (148 aa).

Belongs to the universal ribosomal protein uL13 family. As to quaternary structure, part of the 50S ribosomal subunit.

This protein is one of the early assembly proteins of the 50S ribosomal subunit, although it is not seen to bind rRNA by itself. It is important during the early stages of 50S assembly. The protein is Large ribosomal subunit protein uL13 of Oenococcus oeni (strain ATCC BAA-331 / PSU-1).